The sequence spans 433 residues: Glutamate-1-semialdehyde 2,1-aminomutase (433 aa).

Position 271 is an N6-(pyridoxal phosphate)lysine (Lys-271).

The protein belongs to the class-III pyridoxal-phosphate-dependent aminotransferase family. HemL subfamily. Homodimer. The cofactor is pyridoxal 5'-phosphate.

The protein resides in the cytoplasm. The catalysed reaction is (S)-4-amino-5-oxopentanoate = 5-aminolevulinate. The protein operates within porphyrin-containing compound metabolism; protoporphyrin-IX biosynthesis; 5-aminolevulinate from L-glutamyl-tRNA(Glu): step 2/2. Its pathway is porphyrin-containing compound metabolism; chlorophyll biosynthesis. This Prochlorococcus marinus (strain MIT 9515) protein is Glutamate-1-semialdehyde 2,1-aminomutase.